Here is a 501-residue protein sequence, read N- to C-terminus: MIWNRKTRYTPYEQWPATKLPQLVAQARQSKWRMQHHIQPTSGLLNDPNGFSYFDGQWHLFYQVFPFGPVHGLKSWQHVTSKNLVDWHDEGLAIRPDTPYDSHGAYTGTALPIDDQLFIMYTGNVRTADWQRESYQLGAWMDTDNHIKKLSRPLIAHAPAGYTSSFRDPDLIRNDHGYYALIGAQTTTEIGAILVYFSKDLTTWTCQGELNVPANARGYMIECPNLVWIDQQPVLLFCPQGLSQATIPYQNIYPNMYLVADQLNLAQAQFTEPHALTQLDDGFDVYATQAINAPDGRALAVSWIGLPEISYPTDRENWAHCLSLVKELTLKDGHLYQNPVAAVDDLRTTAHDLVFEQQRATVAALNGSFELLLTVPADKTVTVNIADQQESGQLQVTVDANHGQVMIDRRHTGNSFAEDYGQTRQVELTAHKTIKIRLIIDVSVFECYIDNGYSVMTGRFFLNATPSRLNVQGDTTAVTGKVWEWRQSEHTGVDNNETKIK.

Substrate is bound by residues 44-47, Q63, 106-107, 167-168, and E222; these read LLND, YT, and RD. D47 is a catalytic residue.

The protein belongs to the glycosyl hydrolase 32 family.

The enzyme catalyses Hydrolysis of terminal non-reducing beta-D-fructofuranoside residues in beta-D-fructofuranosides.. It participates in glycan biosynthesis; sucrose metabolism. The chain is Sucrose-6-phosphate hydrolase (scrB) from Pediococcus pentosaceus.